The chain runs to 188 residues: Acireductone dioxygenase (188 aa).

Residues H97, H99, E103, and H141 each contribute to the Fe(2+) site. H97, H99, E103, and H141 together coordinate Ni(2+).

It belongs to the acireductone dioxygenase (ARD) family. As to quaternary structure, monomer. Fe(2+) serves as cofactor. The cofactor is Ni(2+).

The catalysed reaction is 1,2-dihydroxy-5-(methylsulfanyl)pent-1-en-3-one + O2 = 3-(methylsulfanyl)propanoate + CO + formate + 2 H(+). It carries out the reaction 1,2-dihydroxy-5-(methylsulfanyl)pent-1-en-3-one + O2 = 4-methylsulfanyl-2-oxobutanoate + formate + 2 H(+). It participates in amino-acid biosynthesis; L-methionine biosynthesis via salvage pathway; L-methionine from S-methyl-5-thio-alpha-D-ribose 1-phosphate: step 5/6. In terms of biological role, catalyzes 2 different reactions between oxygen and the acireductone 1,2-dihydroxy-3-keto-5-methylthiopentene (DHK-MTPene) depending upon the metal bound in the active site. Fe-containing acireductone dioxygenase (Fe-ARD) produces formate and 2-keto-4-methylthiobutyrate (KMTB), the alpha-ketoacid precursor of methionine in the methionine recycle pathway. Ni-containing acireductone dioxygenase (Ni-ARD) produces methylthiopropionate, carbon monoxide and formate, and does not lie on the methionine recycle pathway. The protein is Acireductone dioxygenase of Xylella fastidiosa (strain M23).